The chain runs to 318 residues: Large ribosomal subunit protein uL10 (318 aa).

At Tyr-24 the chain carries Phosphotyrosine. Thr-59 carries the phosphothreonine modification. Lys-264 is covalently cross-linked (Glycyl lysine isopeptide (Lys-Gly) (interchain with G-Cter in ubiquitin)). Residue Lys-298 forms a Glycyl lysine isopeptide (Lys-Gly) (interchain with G-Cter in SUMO1); alternate linkage. Lys-298 is covalently cross-linked (Glycyl lysine isopeptide (Lys-Gly) (interchain with G-Cter in SUMO2); alternate). The tract at residues 298–318 (KVEAKEESEESDEDMGFGLFD) is disordered. Positions 303–312 (EESEESDEDM) are enriched in acidic residues. Ser-305 and Ser-308 each carry phosphoserine.

This sequence belongs to the universal ribosomal protein uL10 family. In terms of assembly, P0 forms a pentameric complex by interaction with dimers of P1 and P2. Identified in a IGF2BP1-dependent mRNP granule complex containing untranslated mRNAs. Interacts with APEX1. Interacts with FMR1. Post-translationally, ubiquitinated at Lys-264 by RNF14 and RNF25 in response to ribosome collisions (ribosome stalling).

It is found in the nucleus. The protein resides in the cytoplasm. Its function is as follows. Ribosomal protein P0 is the functional equivalent of E.coli protein L10. The sequence is that of Large ribosomal subunit protein uL10 (RPLP0) from Sus scrofa (Pig).